A 1018-amino-acid chain; its full sequence is UPF0182 protein Tfu_0541 (1018 aa).

7 helical membrane passes run 20–40 (LAPVGAAVVVIIAGIMFAANF), 64–84 (ALLFAGGALLMALAVGLSVYF), 115–135 (VFFWGLVGGLALLTGASATAE), 171–191 (VIIGYLYTAVVIAFIAGVVVH), 212–232 (VHLSVLLGVFLLLRAADYWLE), 254–274 (AVLYAKIILFFIALVCAVLFF), and 287–307 (VSLGLMVLSAILIGGVYPAIV). Disordered regions lie at residues 497-570 (YPVD…QANN) and 939-965 (GDEAPLEEPTTDGEAREEEEQPQASSD). Acidic residues-rich tracts occupy residues 542–560 (QDQEGQDGGEDAQGTEEEQ) and 939–959 (GDEAPLEEPTTDGEAREEEEQ).

This sequence belongs to the UPF0182 family.

Its subcellular location is the cell membrane. The protein is UPF0182 protein Tfu_0541 of Thermobifida fusca (strain YX).